Consider the following 341-residue polypeptide: HTH-type transcriptional repressor PurR (341 aa).

Positions 2–56 (ATIKDVAKRANVSTTTVSHVINKTRFVSEETRNAVWAAIKELHYSPSAVARSLKV) constitute an HTH lacI-type domain. Positions 4–23 (IKDVAKRANVSTTTVSHVIN) form a DNA-binding region, H-T-H motif. A DNA-binding region spans residues 48-56 (SAVARSLKV). Residues Tyr-73, Arg-190, Thr-192, Phe-221, and Asp-275 each contribute to the hypoxanthine site.

Homodimer.

The protein operates within purine metabolism; purine nucleotide biosynthesis [regulation]. In terms of biological role, is the main repressor of the genes involved in the de novo synthesis of purine nucleotides, regulating purB, purC, purEK, purF, purHD, purL, purMN and guaBA expression. PurR is allosterically activated to bind its cognate DNA by binding the purine corepressors, hypoxanthine or guanine, thereby effecting transcription repression. The polypeptide is HTH-type transcriptional repressor PurR (Escherichia coli O139:H28 (strain E24377A / ETEC)).